The following is a 160-amino-acid chain: Crossover junction endodeoxyribonuclease RuvC (160 aa).

Active-site residues include Asp9, Glu68, and Asp141. Mg(2+) is bound by residues Asp9, Glu68, and Asp141.

Belongs to the RuvC family. In terms of assembly, homodimer which binds Holliday junction (HJ) DNA. The HJ becomes 2-fold symmetrical on binding to RuvC with unstacked arms; it has a different conformation from HJ DNA in complex with RuvA. In the full resolvosome a probable DNA-RuvA(4)-RuvB(12)-RuvC(2) complex forms which resolves the HJ. Mg(2+) is required as a cofactor.

It localises to the cytoplasm. It carries out the reaction Endonucleolytic cleavage at a junction such as a reciprocal single-stranded crossover between two homologous DNA duplexes (Holliday junction).. Its function is as follows. The RuvA-RuvB-RuvC complex processes Holliday junction (HJ) DNA during genetic recombination and DNA repair. Endonuclease that resolves HJ intermediates. Cleaves cruciform DNA by making single-stranded nicks across the HJ at symmetrical positions within the homologous arms, yielding a 5'-phosphate and a 3'-hydroxyl group; requires a central core of homology in the junction. The consensus cleavage sequence is 5'-(A/T)TT(C/G)-3'. Cleavage occurs on the 3'-side of the TT dinucleotide at the point of strand exchange. HJ branch migration catalyzed by RuvA-RuvB allows RuvC to scan DNA until it finds its consensus sequence, where it cleaves and resolves the cruciform DNA. This Campylobacter jejuni subsp. jejuni serotype O:2 (strain ATCC 700819 / NCTC 11168) protein is Crossover junction endodeoxyribonuclease RuvC.